Reading from the N-terminus, the 328-residue chain is Delta(3,5)-Delta(2,4)-dienoyl-CoA isomerase, mitochondrial (328 aa).

Residues 1–33 (MAAGIVASRRLRDLLTRRLTGSNYPGLSISLRL) constitute a mitochondrion transit peptide. Substrate contacts are provided by residues 116–120 (AGIDL) and glycine 174. Lysine 231 is modified (N6-succinyllysine). Serine 268 carries the post-translational modification Phosphoserine. Residues 326 to 328 (SKL) carry the Microbody targeting signal motif. The residue at position 327 (lysine 327) is an N6-acetyllysine.

The protein belongs to the enoyl-CoA hydratase/isomerase family. In terms of assembly, homohexamer.

Its subcellular location is the mitochondrion. The protein resides in the peroxisome. It catalyses the reaction (3E,5Z)-octadienoyl-CoA = (2E,4E)-octadienoyl-CoA. The enzyme catalyses (3E,5Z,8Z,11Z,14Z)-eicosapentaenoyl-CoA = (2E,4E,8Z,11Z,14Z)-eicosapentaenoyl-CoA. The protein operates within lipid metabolism; fatty acid beta-oxidation. Its function is as follows. Isomerization of 3-trans,5-cis-dienoyl-CoA to 2-trans,4-trans-dienoyl-CoA. The protein is Delta(3,5)-Delta(2,4)-dienoyl-CoA isomerase, mitochondrial of Homo sapiens (Human).